A 499-amino-acid chain; its full sequence is MDNMNHEELNDQLLVRREKLHNLREQGIDPFGKRFERTNATNELLSLYGEFSKEELEEKEISVSIAGRIMTKRGKGKAGFAHIQDLHGQVQIYVRKDAVGDEEYELFKTADLGDLVGIEGKVFKTNVGELSVKATGFTLLTKSLRPLPDKYHGLKDVEQRYRQRYLDLITSMESRETFVTRSKIIREMRRYLDDNGYLEVETPMMHAIAGGASARPFITHHNALDMELYMRIAIELHLKRLIVGGLEKVYEIGRVFRNEGVSTRHNPEFTMIELYEAYADYKDIMKLTENMVAHIAKQVLGTTTIQYGDYEINLEPEWTRLHMVDAIKEHSGADFWNPMSVEEARELAKEHNVEIKDTMEVGHIINEFFEQKVEDKLIQPTFIYGHPVEISPLAKKNDEDPRFTDRFELFIVAREHANAFTELNDPIDQKERFEAQLKEREQGNDEAHMMDDDYIEALEYGMPPTGGLGIGIDRLVMLLTNAPSIRDVLLFPAMRHKQD.

Mg(2+) contacts are provided by Glu408 and Glu415.

This sequence belongs to the class-II aminoacyl-tRNA synthetase family. Homodimer. The cofactor is Mg(2+).

It localises to the cytoplasm. The catalysed reaction is tRNA(Lys) + L-lysine + ATP = L-lysyl-tRNA(Lys) + AMP + diphosphate. The sequence is that of Lysine--tRNA ligase from Bacillus cereus (strain ATCC 10987 / NRS 248).